Here is a 332-residue protein sequence, read N- to C-terminus: Long form salivary protein D7L2 (332 aa).

Residues Met1 to Ala21 form the signal peptide. Intrachain disulfides connect Cys40-Cys77 and Cys73-Cys133. Leukotriene E4 is bound at residue Trp61. Leukotriene E4-binding residues include Gly157 and Lys176. Cystine bridges form between Cys184-Cys219, Cys200-Cys331, and Cys259-Cys278. Residues Glu185, Arg203, and His216 each coordinate noradrenaline. Noradrenaline contacts are provided by Asp294 and Glu297.

Belongs to the PBP/GOBP family. In terms of assembly, interacts with human CD4. Saliva (at protein level). Female salivary gland (at protein level). Detected in the head and thorax of the female mosquitoes, where the salivary glands are located.

It localises to the secreted. Functionally, modulates blood feeding of female mosquitoes on vertebrate species by binding and sequestering different mediators involved in the host response, such as biogenic amines and eicosanoids. Binds serotonin, histamine, tryptamine, noradrenaline, leukotriene B4, leukotriene C4, leukotriene D4, leukotriene E4 and U-46619, a stable analog of thromboxane A2. Does not bind adrenaline. Exhibits vasodilating activity. Inhibits agonist-induced platelet aggregation but not blood clotting. (Microbial infection) Probably promotes Plasmodium gallinaceum oocyst development in mosquito midgut. In Aedes aegypti (Yellowfever mosquito), this protein is Long form salivary protein D7L2.